Reading from the N-terminus, the 133-residue chain is Putative N-acetylgalactosamine permease IIC component 2 (133 aa).

The Cytoplasmic portion of the chain corresponds to 1 to 2 (ME). In terms of domain architecture, PTS EIIC type-4 spans 1 to 133 (MEISLLQAFA…CDLATNPRRI (133 aa)). The helical transmembrane segment at 3-23 (ISLLQAFALGIIAFIAGLDMF) threads the bilayer. The Periplasmic segment spans residues 24–32 (NGLTHMHRP). Residues 33 to 53 (VVLGPLVGLVLGDLHTGILTG) form a helical membrane-spanning segment. Residues 54–65 (GTLELVWMGLAP) lie on the Cytoplasmic side of the membrane. A helical membrane pass occupies residues 66 to 86 (LAGAQPPNVIIGTIVGTAFAI). Residues 87-93 (TTGVKPD) lie on the Periplasmic side of the membrane. A helical transmembrane segment spans residues 94-114 (VAVGVAVPFAVAVQMGITFLF). Topologically, residues 115-133 (SVMSGVMSRCDLATNPRRI) are cytoplasmic.

The protein resides in the cell inner membrane. Its function is as follows. The phosphoenolpyruvate-dependent sugar phosphotransferase system (PTS), a major carbohydrate active -transport system, catalyzes the phosphorylation of incoming sugar substrates concomitant with their translocation across the cell membrane. This system is involved in N-acetylgalactosamine transport. This is Putative N-acetylgalactosamine permease IIC component 2 (agaW) from Escherichia coli (strain K12).